A 210-amino-acid chain; its full sequence is Large ribosomal subunit protein uL3 (210 aa).

The protein belongs to the universal ribosomal protein uL3 family. As to quaternary structure, part of the 50S ribosomal subunit. Forms a cluster with proteins L14 and L19.

Functionally, one of the primary rRNA binding proteins, it binds directly near the 3'-end of the 23S rRNA, where it nucleates assembly of the 50S subunit. The protein is Large ribosomal subunit protein uL3 of Amoebophilus asiaticus (strain 5a2).